Reading from the N-terminus, the 178-residue chain is Large ribosomal subunit protein bL25 (178 aa).

The protein belongs to the bacterial ribosomal protein bL25 family. CTC subfamily. In terms of assembly, part of the 50S ribosomal subunit; part of the 5S rRNA/L5/L18/L25 subcomplex. Contacts the 5S rRNA. Binds to the 5S rRNA independently of L5 and L18.

Functionally, this is one of the proteins that binds to the 5S RNA in the ribosome where it forms part of the central protuberance. This Nitratiruptor sp. (strain SB155-2) protein is Large ribosomal subunit protein bL25.